We begin with the raw amino-acid sequence, 306 residues long: Ribosomal protein L11 methyltransferase (306 aa).

Residues Thr-154, Gly-179, Asp-201, and Asn-242 each contribute to the S-adenosyl-L-methionine site.

Belongs to the methyltransferase superfamily. PrmA family.

The protein resides in the cytoplasm. It carries out the reaction L-lysyl-[protein] + 3 S-adenosyl-L-methionine = N(6),N(6),N(6)-trimethyl-L-lysyl-[protein] + 3 S-adenosyl-L-homocysteine + 3 H(+). Functionally, methylates ribosomal protein L11. This Xanthomonas axonopodis pv. citri (strain 306) protein is Ribosomal protein L11 methyltransferase.